A 411-amino-acid chain; its full sequence is KIN17-like protein (411 aa).

The segment at 28–50 (CQMCQKQCRDENGFKCHCMSESH) adopts a C2H2-type zinc-finger fold. The winged helix-turn-helix (wHTH) stretch occupies residues 51-160 (QRQMQVFGQN…KERLKNKRVK (110 aa)). Residues 147–183 (ETLFKERLKNKRVKSDLAEEEKQEREIQRQIERAAEK) adopt a coiled-coil conformation. Disordered regions lie at residues 182 to 211 (EKLNGGGGEGETSGNDEVVDDGDDERKKDE) and 232 to 286 (VATG…EEEK). Residues 253 to 286 (KVERGEKRKRSGDSGRSEKERRSALDELMKEEEK) are compositionally biased toward basic and acidic residues. A Nuclear localization signal (NLS) motif is present at residues 259-262 (KRKR). The stretch at 265 to 294 (DSGRSEKERRSALDELMKEEEKKKERMNRK) forms a coiled coil. The segment at 301-352 (GIIVKVMSKALAEKGYYKQKGVVKKVIDNYVGEIKMLDSKHVLRVDQKELET) is C-terminal subdomain A. The segment at 358–409 (GGMVKIVNGAYRGSNARLLGVDTEKFCAKVQIEKGVYDGRVIKSIEYEDICK) is C-terminal subdomain B.

It belongs to the KIN17 family. As to quaternary structure, interacts with SPL7. Expressed in root vasculature, lateral roots, cotyledons, rosette leaves, cauline leaves, stems, sepals, style of pistils, mature pollen grains and siliques.

It is found in the nucleus speckle. In terms of biological role, promotes the copper deficiency response by direct interaction with SPL7. Acts with SPL7 in a common pathway to promote copper-responsive genes and alleviate oxidative stress during copper-limiting periods. May promote SPL7 function when copper is limiting. Participates in the control of general plant growth and development, and in the response to counteract the negative effects of UV radiation. The chain is KIN17-like protein from Arabidopsis thaliana (Mouse-ear cress).